The chain runs to 245 residues: tRNA pseudouridine synthase A (245 aa).

Aspartate 52 acts as the Nucleophile in catalysis. Tyrosine 111 serves as a coordination point for substrate.

Belongs to the tRNA pseudouridine synthase TruA family. Homodimer.

It catalyses the reaction uridine(38/39/40) in tRNA = pseudouridine(38/39/40) in tRNA. Its function is as follows. Formation of pseudouridine at positions 38, 39 and 40 in the anticodon stem and loop of transfer RNAs. The protein is tRNA pseudouridine synthase A of Rhodospirillum centenum (strain ATCC 51521 / SW).